Consider the following 350-residue polypeptide: Bifunctional nitrilase/nitrile hydratase NIT4B (350 aa).

The CN hydrolase domain maps to 30–302 (VRATVVQAST…EALISADLDL (273 aa)). E70 functions as the Proton acceptor in the catalytic mechanism. K157 is an active-site residue. C191 acts as the Nucleophile in catalysis.

The protein belongs to the carbon-nitrogen hydrolase superfamily. Nitrilase family. As to expression, highly expressed in leaves and cotyledons, lower expression in stems and roots.

It catalyses the reaction L-asparagine = 3-cyano-L-alanine + H2O. The enzyme catalyses 3-cyano-L-alanine + 2 H2O = L-aspartate + NH4(+). In terms of biological role, involved in the cyanide detoxification pathway. Has nitrilase and nitrile-hydratase activity in the ratio 3.3:1, producing both asparagine and aspartic acid from beta-cyano-L-alanine (Ala(CN)). Can also use 3-phenylpropionitrile as substrate, but not indole-3-acetonitrile. The sequence is that of Bifunctional nitrilase/nitrile hydratase NIT4B (NIT4B) from Lupinus angustifolius (Narrow-leaved blue lupine).